The chain runs to 282 residues: Bifunctional protein FolD (282 aa).

NADP(+)-binding positions include 165-167 (GAS) and isoleucine 231.

Belongs to the tetrahydrofolate dehydrogenase/cyclohydrolase family. Homodimer.

The enzyme catalyses (6R)-5,10-methylene-5,6,7,8-tetrahydrofolate + NADP(+) = (6R)-5,10-methenyltetrahydrofolate + NADPH. The catalysed reaction is (6R)-5,10-methenyltetrahydrofolate + H2O = (6R)-10-formyltetrahydrofolate + H(+). The protein operates within one-carbon metabolism; tetrahydrofolate interconversion. In terms of biological role, catalyzes the oxidation of 5,10-methylenetetrahydrofolate to 5,10-methenyltetrahydrofolate and then the hydrolysis of 5,10-methenyltetrahydrofolate to 10-formyltetrahydrofolate. The protein is Bifunctional protein FolD of Francisella tularensis subsp. mediasiatica (strain FSC147).